We begin with the raw amino-acid sequence, 57 residues long: Potassium channel toxin alpha-KTx 8.7 (57 aa).

Residues 1 to 28 (MSRLYAIILIALVFNVIMTIMPDMKVEA) form the signal peptide. Disulfide bonds link Cys31–Cys47, Cys34–Cys52, and Cys38–Cys54.

As to expression, expressed by the venom gland.

It is found in the secreted. Functionally, inhibits voltage-gated potassium channel rKv1.1/KCNA1 at nanomolar ranges (IC(50)=8.5 nM). The chain is Potassium channel toxin alpha-KTx 8.7 from Mesobuthus eupeus (Lesser Asian scorpion).